The sequence spans 128 residues: DNA-directed RNA polymerase subunit omega (128 aa).

The segment at 87 to 106 (ARSSQAAPKSAPGQEIGKSF) is disordered.

This sequence belongs to the RNA polymerase subunit omega family. The RNAP catalytic core consists of 2 alpha, 1 beta, 1 beta' and 1 omega subunit. When a sigma factor is associated with the core the holoenzyme is formed, which can initiate transcription.

The enzyme catalyses RNA(n) + a ribonucleoside 5'-triphosphate = RNA(n+1) + diphosphate. Its function is as follows. Promotes RNA polymerase assembly. Latches the N- and C-terminal regions of the beta' subunit thereby facilitating its interaction with the beta and alpha subunits. In Anaplasma marginale (strain St. Maries), this protein is DNA-directed RNA polymerase subunit omega.